We begin with the raw amino-acid sequence, 344 residues long: Aurora kinase B (344 aa).

A Phosphothreonine modification is found at Thr-35. Ser-62 is modified (phosphoserine). Thr-64 is subject to Phosphothreonine. One can recognise a Protein kinase domain in the interval 77-327; the sequence is FEIGRPLGKG…LAQVSAHPWV (251 aa). ATP-binding positions include 83 to 91 and Lys-106; that span reads LGKGKFGNV. Catalysis depends on Asp-200, which acts as the Proton acceptor. N6-acetyllysine is present on Lys-215. Ser-227 carries the phosphoserine modification. At Thr-232 the chain carries Phosphothreonine; by autocatalysis.

It belongs to the protein kinase superfamily. Ser/Thr protein kinase family. Aurora subfamily. Component of the chromosomal passenger complex (CPC) composed of at least BIRC5/survivin, CDCA8/borealin, INCENP, AURKB or AURKC; predominantly independent AURKB- and AURKC-containing complexes exist. Associates with RACGAP1 during M phase. Interacts with SPDYC; this interaction may be required for proper localization of active, Thr-232-phosphorylated AURKB form during prometaphase and metaphase. Interacts with p53/TP53. Interacts (via the middle kinase domain) with NOC2L (via the N- and C-terminus domains). Interacts with CDCA1. Interacts with EVI5. Interacts with JTB. Interacts with NDC80. Interacts with PSMA3. Interacts with RNF2/RING1B. Interacts with SEPTIN1. Interacts with SIRT2. Interacts with TACC1. Interacts with TTC28. Post-translationally, the phosphorylation of Thr-232 requires the binding to INCENP and occurs by means of an autophosphorylation mechanism. Thr-232 phosphorylation is indispensable for the AURKB kinase activity. Acetylated at Lys-215 by KAT5 at kinetochores, increasing AURKB activity and promoting accurate chromosome segregation in mitosis. In terms of processing, ubiquitinated by different BCR (BTB-CUL3-RBX1) E3 ubiquitin ligase complexes. Ubiquitinated by the BCR(KLHL9-KLHL13) E3 ubiquitin ligase complex, ubiquitination leads to removal from mitotic chromosomes and is required for cytokinesis. During anaphase, the BCR(KLHL21) E3 ubiquitin ligase complex recruits the CPC complex from chromosomes to the spindle midzone and mediates the ubiquitination of AURKB. Ubiquitination of AURKB by BCR(KLHL21) E3 ubiquitin ligase complex may not lead to its degradation by the proteasome. Deubiquitinated by USP35; inhibiting CDH1-mediated degradation of AURKB.

The protein localises to the nucleus. It is found in the chromosome. It localises to the centromere. The protein resides in the kinetochore. Its subcellular location is the cytoplasm. The protein localises to the cytoskeleton. It is found in the spindle. It localises to the midbody. It carries out the reaction L-seryl-[protein] + ATP = O-phospho-L-seryl-[protein] + ADP + H(+). The catalysed reaction is L-threonyl-[protein] + ATP = O-phospho-L-threonyl-[protein] + ADP + H(+). With respect to regulation, activity is greatly increased when AURKB is within the CPC complex. In particular, AURKB-phosphorylated INCENP acts as an activator of AURKB. Positive feedback between HASPIN and AURKB contributes to CPC localization. Functionally, serine/threonine-protein kinase component of the chromosomal passenger complex (CPC), a complex that acts as a key regulator of mitosis. The CPC complex has essential functions at the centromere in ensuring correct chromosome alignment and segregation and is required for chromatin-induced microtubule stabilization and spindle assembly. Involved in the bipolar attachment of spindle microtubules to kinetochores and is a key regulator for the onset of cytokinesis during mitosis. Required for central/midzone spindle assembly and cleavage furrow formation. Key component of the cytokinesis checkpoint, a process required to delay abscission to prevent both premature resolution of intercellular chromosome bridges and accumulation of DNA damage: phosphorylates CHMP4C, leading to retain abscission-competent VPS4 (VPS4A and/or VPS4B) at the midbody ring until abscission checkpoint signaling is terminated at late cytokinesis. AURKB phosphorylates the CPC complex subunits BIRC5/survivin, CDCA8/borealin and INCENP. Phosphorylation of INCENP leads to increased AURKB activity. Other known AURKB substrates involved in centromeric functions and mitosis are CENPA, DES/desmin, GPAF, KIF2C, NSUN2, RACGAP1, SEPTIN1, VIM/vimentin, HASPIN, and histone H3. A positive feedback loop involving HASPIN and AURKB contributes to localization of CPC to centromeres. Phosphorylation of VIM controls vimentin filament segregation in cytokinetic process, whereas histone H3 is phosphorylated at 'Ser-10' and 'Ser-28' during mitosis (H3S10ph and H3S28ph, respectively). AURKB is also required for kinetochore localization of BUB1 and SGO1. Phosphorylation of p53/TP53 negatively regulates its transcriptional activity. Key regulator of active promoters in resting B- and T-lymphocytes: acts by mediating phosphorylation of H3S28ph at active promoters in resting B-cells, inhibiting RNF2/RING1B-mediated ubiquitination of histone H2A and enhancing binding and activity of the USP16 deubiquitinase at transcribed genes. Acts as an inhibitor of CGAS during mitosis: catalyzes phosphorylation of the N-terminus of CGAS during the G2-M transition, blocking CGAS liquid phase separation and activation, and thereby preventing CGAS-induced autoimmunity. Phosphorylates KRT5 during anaphase and telophase. Phosphorylates ATXN10 which promotes phosphorylation of ATXN10 by PLK1 and may play a role in the regulation of cytokinesis and stimulating the proteasomal degradation of ATXN10. This is Aurora kinase B (AURKB) from Sus scrofa (Pig).